A 124-amino-acid polypeptide reads, in one-letter code: Prefoldin subunit beta (124 aa).

It belongs to the prefoldin subunit beta family. In terms of assembly, heterohexamer of two alpha and four beta subunits.

It localises to the cytoplasm. In terms of biological role, molecular chaperone capable of stabilizing a range of proteins. Seems to fulfill an ATP-independent, HSP70-like function in archaeal de novo protein folding. This Thermoplasma volcanium (strain ATCC 51530 / DSM 4299 / JCM 9571 / NBRC 15438 / GSS1) protein is Prefoldin subunit beta (pfdB).